The chain runs to 916 residues: Translation initiation factor IF-2 (916 aa).

Residues 151 to 191 (NLDEQQRLAESDRARDEAIQRKRDEEQAAKDRVEAERKAAE) show a composition bias toward basic and acidic residues. Disordered regions lie at residues 151-262 (NLDE…SHVM) and 280-328 (HLSA…ERPT). Low complexity-rich tracts occupy residues 192-243 (EAAA…ATPA) and 293-305 (RGKP…SSSS). Residues 415–584 (SRPPVVTIMG…SLQAEVLELK (170 aa)) form the tr-type G domain. The segment at 424-431 (GHVDHGKT) is G1. GTP is bound at residue 424–431 (GHVDHGKT). Residues 449 to 453 (GITQH) are G2. The segment at 470–473 (DTPG) is G3. GTP is bound by residues 470–474 (DTPGH) and 524–527 (NKID). The G4 stretch occupies residues 524 to 527 (NKID). Residues 560 to 562 (SAK) form a G5 region.

Belongs to the TRAFAC class translation factor GTPase superfamily. Classic translation factor GTPase family. IF-2 subfamily.

The protein resides in the cytoplasm. Functionally, one of the essential components for the initiation of protein synthesis. Protects formylmethionyl-tRNA from spontaneous hydrolysis and promotes its binding to the 30S ribosomal subunits. Also involved in the hydrolysis of GTP during the formation of the 70S ribosomal complex. In Xanthomonas campestris pv. campestris (strain B100), this protein is Translation initiation factor IF-2.